Reading from the N-terminus, the 200-residue chain is Recombination protein RecR (200 aa).

The C4-type zinc finger occupies 58 to 75 (CPCCFCLKNFPESQCEFC). The 96-residue stretch at 82–177 (STLCIVASPK…SISRLALGLP (96 aa)) folds into the Toprim domain.

Belongs to the RecR family.

In terms of biological role, may play a role in DNA repair. It seems to be involved in an RecBC-independent recombinational process of DNA repair. It may act with RecF and RecO. The sequence is that of Recombination protein RecR from Chlamydia felis (strain Fe/C-56) (Chlamydophila felis).